Reading from the N-terminus, the 117-residue chain is MPRVKRGVQARARHKKVLKQAKGYYGARSRVYRVAFQAVTKAGQYAYRDRRNKKRVFRQLWIARINAAARQNEMSYSRFINGLKKASIEIDRKILADIAVFDKVAFAALVEKAKAAL.

It belongs to the bacterial ribosomal protein bL20 family.

In terms of biological role, binds directly to 23S ribosomal RNA and is necessary for the in vitro assembly process of the 50S ribosomal subunit. It is not involved in the protein synthesizing functions of that subunit. This is Large ribosomal subunit protein bL20 from Aliivibrio fischeri (strain ATCC 700601 / ES114) (Vibrio fischeri).